Reading from the N-terminus, the 102-residue chain is uncharacterized protein (102 aa).

The disordered stretch occupies residues 1-21 (MAESVNENNNNAGDSNGSGRT). The N-linked (GlcNAc...) asparagine glycan is linked to asparagine 16. The chain crosses the membrane as a helical span at residues 24-44 (NTIVTIVVVVIVVTLIIILAT). The tract at residues 49 to 102 (IGGSGKKVGAEEPATKLSSKSDDRNGGPNKKSPAKGSSKDDNNTEESVQSNLYG) is disordered. Positions 56 to 73 (VGAEEPATKLSSKSDDRN) are enriched in basic and acidic residues. Asparagine 90 carries N-linked (GlcNAc...) asparagine glycosylation. Polar residues predominate over residues 93–102 (EESVQSNLYG).

The protein resides in the membrane. This is an uncharacterized protein from Encephalitozoon cuniculi (strain GB-M1) (Microsporidian parasite).